We begin with the raw amino-acid sequence, 129 residues long: Small ribosomal subunit protein uS11 (129 aa).

Belongs to the universal ribosomal protein uS11 family. As to quaternary structure, part of the 30S ribosomal subunit. Interacts with proteins S7 and S18. Binds to IF-3.

Functionally, located on the platform of the 30S subunit, it bridges several disparate RNA helices of the 16S rRNA. Forms part of the Shine-Dalgarno cleft in the 70S ribosome. The chain is Small ribosomal subunit protein uS11 from Desulfitobacterium hafniense (strain DSM 10664 / DCB-2).